The sequence spans 116 residues: Ribosome-binding factor A (116 aa).

It belongs to the RbfA family. Monomer. Binds 30S ribosomal subunits, but not 50S ribosomal subunits or 70S ribosomes.

Its subcellular location is the cytoplasm. Its function is as follows. One of several proteins that assist in the late maturation steps of the functional core of the 30S ribosomal subunit. Associates with free 30S ribosomal subunits (but not with 30S subunits that are part of 70S ribosomes or polysomes). Required for efficient processing of 16S rRNA. May interact with the 5'-terminal helix region of 16S rRNA. The chain is Ribosome-binding factor A from Enterococcus faecalis (strain ATCC 700802 / V583).